A 269-amino-acid chain; its full sequence is Formamidopyrimidine-DNA glycosylase (269 aa).

Proline 2 acts as the Schiff-base intermediate with DNA in catalysis. The active-site Proton donor is the glutamate 3. Residue lysine 57 is the Proton donor; for beta-elimination activity of the active site. 3 residues coordinate DNA: histidine 90, arginine 109, and lysine 150. The segment at 235-269 adopts an FPG-type zinc-finger fold; the sequence is QVYGRKGEPCRVCGTPIVATKHAQRATFYCRHCQK. The active-site Proton donor; for delta-elimination activity is the arginine 259.

Belongs to the FPG family. As to quaternary structure, monomer. The cofactor is Zn(2+).

The catalysed reaction is Hydrolysis of DNA containing ring-opened 7-methylguanine residues, releasing 2,6-diamino-4-hydroxy-5-(N-methyl)formamidopyrimidine.. It carries out the reaction 2'-deoxyribonucleotide-(2'-deoxyribose 5'-phosphate)-2'-deoxyribonucleotide-DNA = a 3'-end 2'-deoxyribonucleotide-(2,3-dehydro-2,3-deoxyribose 5'-phosphate)-DNA + a 5'-end 5'-phospho-2'-deoxyribonucleoside-DNA + H(+). Involved in base excision repair of DNA damaged by oxidation or by mutagenic agents. Acts as a DNA glycosylase that recognizes and removes damaged bases. Has a preference for oxidized purines, such as 7,8-dihydro-8-oxoguanine (8-oxoG). Has AP (apurinic/apyrimidinic) lyase activity and introduces nicks in the DNA strand. Cleaves the DNA backbone by beta-delta elimination to generate a single-strand break at the site of the removed base with both 3'- and 5'-phosphates. The sequence is that of Formamidopyrimidine-DNA glycosylase from Salmonella agona (strain SL483).